Reading from the N-terminus, the 146-residue chain is Large ribosomal subunit protein bL19 (146 aa).

This sequence belongs to the bacterial ribosomal protein bL19 family.

Functionally, this protein is located at the 30S-50S ribosomal subunit interface and may play a role in the structure and function of the aminoacyl-tRNA binding site. In Bartonella quintana (strain Toulouse) (Rochalimaea quintana), this protein is Large ribosomal subunit protein bL19.